Reading from the N-terminus, the 178-residue chain is Small ribosomal subunit protein uS5 (178 aa).

Residues 13-76 enclose the S5 DRBM domain; that stretch reads LEERVVQINR…EAAKRNLIRV (64 aa). The tract at residues 156–178 is disordered; that stretch reads ASRRDMTPQELMERRTRRETEAA.

Belongs to the universal ribosomal protein uS5 family. Part of the 30S ribosomal subunit. Contacts proteins S4 and S8.

Its function is as follows. With S4 and S12 plays an important role in translational accuracy. In terms of biological role, located at the back of the 30S subunit body where it stabilizes the conformation of the head with respect to the body. This chain is Small ribosomal subunit protein uS5, found in Chloroflexus aurantiacus (strain ATCC 29364 / DSM 637 / Y-400-fl).